The following is a 154-amino-acid chain: Aspartate carbamoyltransferase regulatory chain (154 aa).

Zn(2+)-binding residues include Cys-109, Cys-114, Cys-138, and Cys-141.

The protein belongs to the PyrI family. As to quaternary structure, contains catalytic and regulatory chains. Zn(2+) is required as a cofactor.

Involved in allosteric regulation of aspartate carbamoyltransferase. This is Aspartate carbamoyltransferase regulatory chain from Yersinia pseudotuberculosis serotype O:1b (strain IP 31758).